The primary structure comprises 419 residues: Zinc finger protein Pegasus (419 aa).

3 C2H2-type zinc fingers span residues 79–101 (LKCR…IRIH), 107–129 (HRCH…MRSH), and 135–158 (YKCE…RRRH). 2 disordered regions span residues 203–255 (LQKP…DQDM) and 310–360 (SVNT…TPVQ). The segment covering 208–228 (SEQHHLGDFTHDLPPHAHLHQ) has biased composition (basic and acidic residues). Polar residues-rich tracts occupy residues 310–320 (SVNTAQASSPI) and 341–360 (ERTS…TPVQ). 2 C2H2-type zinc fingers span residues 366–388 (HHCP…MGCH) and 394–418 (FQCN…RGQH).

It belongs to the Ikaros C2H2-type zinc-finger protein family. Probably self-associates.

It is found in the nucleus. Functionally, transcriptional repressor that binds the core 5'GNNTGTNG-3' DNA consensus sequence. The polypeptide is Zinc finger protein Pegasus (ikzf5) (Danio rerio (Zebrafish)).